The chain runs to 761 residues: 1,4-alpha-glucan branching enzyme GlgB (761 aa).

Residue D431 is the Nucleophile of the active site. The active-site Proton donor is E484.

It belongs to the glycosyl hydrolase 13 family. GlgB subfamily. As to quaternary structure, monomer.

It catalyses the reaction Transfers a segment of a (1-&gt;4)-alpha-D-glucan chain to a primary hydroxy group in a similar glucan chain.. Its pathway is glycan biosynthesis; glycogen biosynthesis. Functionally, catalyzes the formation of the alpha-1,6-glucosidic linkages in glycogen by scission of a 1,4-alpha-linked oligosaccharide from growing alpha-1,4-glucan chains and the subsequent attachment of the oligosaccharide to the alpha-1,6 position. This chain is 1,4-alpha-glucan branching enzyme GlgB, found in Synechococcus sp. (strain WH7803).